We begin with the raw amino-acid sequence, 1045 residues long: Septation initiation network scaffold protein cdc11 (1045 aa).

Basic and acidic residues predominate over residues 1–11 (MEQLWLEHDLS). Disordered regions lie at residues 1–269 (MEQL…NTKD) and 282–329 (RGRM…PSLS). The span at 18–39 (PQEQGSDNSSEPPTTSNVNNTQ) shows a compositional bias: polar residues. 3 stretches are compositionally biased toward low complexity: residues 40 to 52 (STGRGSSGTSTEH), 96 to 132 (KQSPPSKSPTKNPSKKSSNNSSRRSSSSVGKLSNVSN), and 152 to 165 (ISSSQFSKKYSEGS). The span at 166–176 (LKSQQSNTRSN) shows a compositional bias: polar residues. Positions 187 to 201 (ASNASSSSSVVSSPS) are enriched in low complexity. Polar residues-rich tracts occupy residues 226 to 238 (NQLTQDVKSNSFE) and 320 to 329 (DSSNAFPSLS). The residue at position 360 (Ser360) is a Phosphoserine. Residues 377-417 (DVGSSQSSSKTARLNSSPKSTLKTSSVKTRRSHSAQSSRKV) form a disordered region. Positions 379–403 (GSSQSSSKTARLNSSPKSTLKTSSV) are enriched in polar residues. Phosphoserine is present on Ser558. 15 LRR repeats span residues 604–625 (RIIQLDISRRHLDSLIGLSELC), 627–646 (SIEELTLEGNEIAYLTGCPV), 647–668 (TIRDLNAVENRLSSLTSFSNLL), 669–690 (NLQYLDISYNQLEDLTGLSSLI), 691–712 (HLRELKVDSNHLWSLDGIQHLD), 713–734 (GLLKLSACNNRIKELSFTNSNL), 736–757 (RLEELLLGNNEIEEIEEISSLQ), 758–779 (NLMVLQLDNNKLTNLKASQPMI), 780–801 (HLRILRISNNAIHQLEVDQFPH), 802–822 (LRTLYMDLNRFNRPPDIRRLK), 846–867 (DIRNLYLSNNTFVTLDCKHMFL), 868–889 (GVRYLELANVQLKEVPKYIATS), 892–913 (NLRVLDLSHNYISDIESLKPLQ), 914–935 (MIHRLYLVGNRIKKMRNLCDIL), and 940–962 (QLNVLDLRMNPLNFNIYPVIDDS). An LRRCT domain is found at 1005–1043 (AWRTRRKMYAEAILLACPHLEWLDGSDVSQSSRAAFTKS).

In terms of assembly, interacts with sid4. When hyperphosphorylated, interacts with byr4. Also interacts with spg1, sid2, cdc13 and cdc16. In terms of processing, phosphorylated by cdc7 and cdk1. Hyperphosphorylated during anaphase. Dephosphorylated by par1.

Its subcellular location is the cytoplasm. The protein resides in the cytoskeleton. It is found in the microtubule organizing center. The protein localises to the spindle pole body. Functionally, essential for the onset of septum formation. Involved in the organization of astral microtubules during mitosis. Acts as a bridge between sid4 and the other SIN proteins mediating their association with the spindle pole body (SPB). The sid4-cdc11 complex organizes a signaling hub on the SPB which coordinates cell and nuclear division. This Schizosaccharomyces pombe (strain 972 / ATCC 24843) (Fission yeast) protein is Septation initiation network scaffold protein cdc11 (cdc11).